We begin with the raw amino-acid sequence, 148 residues long: Lysozyme C (148 aa).

Residues 1 to 18 (MKALIVLGLVLLSVTVQG) form the signal peptide. The C-type lysozyme domain occupies 19-148 (KVFERCELAR…VRQYVQGCGV (130 aa)). Intrachain disulfides connect cysteine 24–cysteine 146, cysteine 48–cysteine 134, cysteine 83–cysteine 99, and cysteine 95–cysteine 113. Catalysis depends on residues glutamate 53 and aspartate 71.

Belongs to the glycosyl hydrolase 22 family. In terms of assembly, monomer.

The protein resides in the secreted. The catalysed reaction is Hydrolysis of (1-&gt;4)-beta-linkages between N-acetylmuramic acid and N-acetyl-D-glucosamine residues in a peptidoglycan and between N-acetyl-D-glucosamine residues in chitodextrins.. Functionally, lysozymes have primarily a bacteriolytic function; those in tissues and body fluids are associated with the monocyte-macrophage system and enhance the activity of immunoagents. This chain is Lysozyme C (LYZ), found in Homo sapiens (Human).